We begin with the raw amino-acid sequence, 590 residues long: Peroxisomal targeting signal receptor (590 aa).

A Glycyl cysteine thioester (Cys-Gly) (interchain with G-Cter in ubiquitin) cross-link involves residue Cys-6. Residues 7 to 29 are amphipathic helix 1 (AH1); that stretch reads SVGSNPLAQLNKHAQGQGSSLSN. Lys-18 participates in a covalent cross-link: Glycyl lysine isopeptide (Lys-Gly) (interchain with G-Cter in ubiquitin). A compositionally biased stretch (polar residues) spans 18 to 30; the sequence is KHAQGQGSSLSNT. The disordered stretch occupies residues 18-45; sequence KHAQGQGSSLSNTHVRHSGGVSGSNVFR. An amphipathic helix 2 (AH2) region spans residues 56-74; it reads RQQLNSFMSQPMRLGEDKM. Short sequence motifs (wxxxF/Y motif) lie at residues 108-112, 139-143, and 178-182; these read WTREF, WKFRY, and WNDKF. An amphipathic helix 4 (AH4) region spans residues 227–243; the sequence is FQEVWDSIQQDTEEMLS. TPR repeat units lie at residues 285-319, 320-353, 424-457, 459-491, and 493-525; these read NPNAYQIGCILMENGAKLSEAALAFEAAIKQDPKH, VDAWLKLGIVQIQNEKELNGMSALETCLKLDPNN, PDIQLCLGLLFYANDEFDRTIDCFQAALKVNPND, LMWNRLGASLANSNRSEEAIQAYHRALQLKPSF, and RARYNLAVSSMNIGCYKEAAEHLLTALSMHDVE.

The protein belongs to the peroxisomal targeting signal receptor family. In terms of assembly, interacts (via WxxxF/Y and LVxEF motifs) with PEX14; promoting translocation through the PEX13-PEX14 docking complex. Monoubiquitinated at Cys-6 by PEX2 during PEX5 passage through the retrotranslocation channel: monoubiquitination acts as a signal for PEX5 extraction and is required for proper export from peroxisomes and recycling. When PEX5 recycling is compromised, polyubiquitinated at Lys-18 by PEX10 during its passage through the retrotranslocation channel, leading to its degradation.

It is found in the cytoplasm. The protein localises to the cytosol. It localises to the peroxisome matrix. Functionally, receptor that mediates peroxisomal import of proteins containing a C-terminal PTS1-type tripeptide peroxisomal targeting signal (SKL-type). Binds to cargo proteins containing a PTS1 peroxisomal targeting signal in the cytosol, and translocates them into the peroxisome matrix by passing through the PEX13-PEX14 docking complex along with cargo proteins. PEX5 receptor is then retrotranslocated into the cytosol, leading to release of bound cargo in the peroxisome matrix, and reset for a subsequent peroxisome import cycle. This Candida glabrata (strain ATCC 2001 / BCRC 20586 / JCM 3761 / NBRC 0622 / NRRL Y-65 / CBS 138) (Yeast) protein is Peroxisomal targeting signal receptor (PEX5).